The following is a 305-amino-acid chain: Ribonuclease BN (305 aa).

Residues His64, His66, Asp68, His69, His141, Asp212, and His270 each coordinate Zn(2+). Asp68 (proton acceptor) is an active-site residue.

It belongs to the RNase Z family. RNase BN subfamily. Homodimer. The cofactor is Zn(2+).

Functionally, zinc phosphodiesterase, which has both exoribonuclease and endoribonuclease activities. The chain is Ribonuclease BN from Escherichia coli O17:K52:H18 (strain UMN026 / ExPEC).